A 393-amino-acid polypeptide reads, in one-letter code: MLKKTIRDVDIAGKRVFVRVDFNVPFNERGEVADDTRIRAVLPTIEYLLTGGAAVILASHLGRPKGKRDDRFSLRPVADRLSALTARQVRFAAEAVGPETEAASRELAPGDILLLENIRFYPEEEQNDPEFASRLAALADLYVNDAFGTAHRAHASTAGIAAHLPAVAGLLLERELDILGRLLSVPERPFVALIGGAKISDKIGVLERLIEKADYLLVGGGMANTFLAAQGHNLQASLVEADRLETARYLLAKAGPGERITLPIDLVVAPDREQPEKRATVAVESIPAGWAAFDLGSGTVRLYANRLRPARTIFWNGPVGLFEVPGFDRGTLDLARVIAAAEATTVVGGGDTVAAVKQAGVLDQVTHVSTGGGASLKLLEGRELPGVAVLQNR.

Substrate contacts are provided by residues 21-23, Arg-37, 60-63, Arg-119, and Arg-152; these read DFN and HLGR. Residues Lys-202, Glu-323, and 349–352 contribute to the ATP site; that span reads GGDT.

It belongs to the phosphoglycerate kinase family. In terms of assembly, monomer.

It is found in the cytoplasm. The enzyme catalyses (2R)-3-phosphoglycerate + ATP = (2R)-3-phospho-glyceroyl phosphate + ADP. It participates in carbohydrate degradation; glycolysis; pyruvate from D-glyceraldehyde 3-phosphate: step 2/5. In Desulforudis audaxviator (strain MP104C), this protein is Phosphoglycerate kinase.